The following is a 625-amino-acid chain: Probable potassium transport system protein Kup 2 (625 aa).

The next 12 helical transmembrane spans lie at 10–30 (LAAL…TSPL), 47–67 (GVHL…VVTL), 104–124 (VLLL…VITP), 140–160 (PAFK…LFAV), 172–192 (FGPV…AEII), 214–234 (GWHM…VEAL), 250–270 (WLGL…ALLM), 283–303 (LFPQ…TVIA), 347–367 (WLLL…SALA), 369–389 (AYGI…FFVV), 396–416 (PLPV…LLVV), and 422–442 (FFQG…VMAT).

It belongs to the HAK/KUP transporter (TC 2.A.72) family.

The protein resides in the cell inner membrane. It carries out the reaction K(+)(in) + H(+)(in) = K(+)(out) + H(+)(out). In terms of biological role, transport of potassium into the cell. Likely operates as a K(+):H(+) symporter. This Albidiferax ferrireducens (strain ATCC BAA-621 / DSM 15236 / T118) (Rhodoferax ferrireducens) protein is Probable potassium transport system protein Kup 2.